A 572-amino-acid polypeptide reads, in one-letter code: Na(+)/citrate cotransporter (572 aa).

The next 8 membrane-spanning stretches (helical) occupy residues 13-33 (SFVI…LVPD), 53-73 (VIPV…LKVL), 80-100 (VQYM…ATAV), 124-144 (LMLG…NTAT), 218-238 (AASI…VLLG), 255-275 (SWFA…WLWL), 315-335 (PLSY…ILWF), and 357-377 (HVTD…VPSQ). N382 carries an N-linked (GlcNAc...) asparagine glycan. The next 4 membrane-spanning stretches (helical) occupy residues 410-430 (VPWG…GCET), 443-463 (PLSS…VAMT), 491-511 (PLYV…LPVA), and 532-552 (TGLV…NTWG). The N-linked (GlcNAc...) asparagine glycan is linked to N566.

It belongs to the SLC13A/DASS transporter (TC 2.A.47) family. NADC subfamily. Homodimer. Expressed in liver, testis and brain.

It localises to the cell membrane. The catalysed reaction is citrate(out) + 4 Na(+)(out) = citrate(in) + 4 Na(+)(in). With respect to regulation, inhibited by Li(+). In terms of biological role, high-affinity sodium/citrate cotransporter that mediates citrate entry into cells, which is a critical participant of biochemical pathways. May function in various metabolic processes in which citrate has a critical role such as energy production (Krebs cycle), fatty acid synthesis, cholesterol synthesis, glycolysis, and gluconeogenesis. Transports citrate into the cell in a Na(+)-dependent manner, recognizing the trivalent form of citrate (physiological pH) rather than the divalent form. Can recognize succinate as a substrate, but its affinity for succinate is several fold lower than for citrate. The stoichiometry is probably 4 Na(+) for each carboxylate, irrespective of whether the translocated substrate is divalent or trivalent, rendering the process electrogenic. Involved in the regulation of citrate levels in the brain. The protein is Na(+)/citrate cotransporter (Slc13a5) of Rattus norvegicus (Rat).